Here is a 411-residue protein sequence, read N- to C-terminus: 2,3-bisphosphoglycerate-independent phosphoglycerate mutase (411 aa).

The protein belongs to the BPG-independent phosphoglycerate mutase family. A-PGAM subfamily.

The enzyme catalyses (2R)-2-phosphoglycerate = (2R)-3-phosphoglycerate. It functions in the pathway carbohydrate degradation; glycolysis; pyruvate from D-glyceraldehyde 3-phosphate: step 3/5. Its function is as follows. Catalyzes the interconversion of 2-phosphoglycerate and 3-phosphoglycerate. This is 2,3-bisphosphoglycerate-independent phosphoglycerate mutase from Pyrobaculum neutrophilum (strain DSM 2338 / JCM 9278 / NBRC 100436 / V24Sta) (Thermoproteus neutrophilus).